A 350-amino-acid polypeptide reads, in one-letter code: Ferredoxin--NADP reductase (350 aa).

Residues threonine 14, aspartate 33, glutamine 41, tyrosine 46, alanine 86, phenylalanine 121, aspartate 286, and threonine 327 each contribute to the FAD site.

This sequence belongs to the ferredoxin--NADP reductase type 2 family. Homodimer. FAD is required as a cofactor.

The catalysed reaction is 2 reduced [2Fe-2S]-[ferredoxin] + NADP(+) + H(+) = 2 oxidized [2Fe-2S]-[ferredoxin] + NADPH. This Flavobacterium johnsoniae (strain ATCC 17061 / DSM 2064 / JCM 8514 / BCRC 14874 / CCUG 350202 / NBRC 14942 / NCIMB 11054 / UW101) (Cytophaga johnsonae) protein is Ferredoxin--NADP reductase.